Reading from the N-terminus, the 119-residue chain is Protein TusC (119 aa).

The protein belongs to the DsrF/TusC family. Heterohexamer, formed by a dimer of trimers. The hexameric TusBCD complex contains 2 copies each of TusB, TusC and TusD. The TusBCD complex interacts with TusE.

It localises to the cytoplasm. In terms of biological role, part of a sulfur-relay system required for 2-thiolation of 5-methylaminomethyl-2-thiouridine (mnm(5)s(2)U) at tRNA wobble positions. The polypeptide is Protein TusC (Buchnera aphidicola subsp. Acyrthosiphon pisum (strain APS) (Acyrthosiphon pisum symbiotic bacterium)).